The primary structure comprises 225 residues: GTP cyclohydrolase III (225 aa).

It belongs to the archaeal-type GTP cyclohydrolase family.

The enzyme catalyses GTP + 3 H2O = 2-amino-5-formylamino-6-(5-phospho-D-ribosylamino)pyrimidin-4(3H)-one + 2 phosphate + 2 H(+). Its function is as follows. Catalyzes the formation of 2-amino-5-formylamino-6-ribofuranosylamino-4(3H)-pyrimidinone ribonucleotide monophosphate and inorganic phosphate from GTP. Also has an independent pyrophosphate phosphohydrolase activity. This Sulfurisphaera tokodaii (strain DSM 16993 / JCM 10545 / NBRC 100140 / 7) (Sulfolobus tokodaii) protein is GTP cyclohydrolase III.